The primary structure comprises 199 residues: FMN-dependent NADH:quinone oxidoreductase 2 (199 aa).

Residues S10, 16-18, and 96-99 contribute to the FMN site; these read SVS and MYNF.

The protein belongs to the azoreductase type 1 family. As to quaternary structure, homodimer. FMN serves as cofactor.

It catalyses the reaction 2 a quinone + NADH + H(+) = 2 a 1,4-benzosemiquinone + NAD(+). The enzyme catalyses N,N-dimethyl-1,4-phenylenediamine + anthranilate + 2 NAD(+) = 2-(4-dimethylaminophenyl)diazenylbenzoate + 2 NADH + 2 H(+). Quinone reductase that provides resistance to thiol-specific stress caused by electrophilic quinones. Its function is as follows. Also exhibits azoreductase activity. Catalyzes the reductive cleavage of the azo bond in aromatic azo compounds to the corresponding amines. The protein is FMN-dependent NADH:quinone oxidoreductase 2 of Pseudomonas putida (strain ATCC 47054 / DSM 6125 / CFBP 8728 / NCIMB 11950 / KT2440).